We begin with the raw amino-acid sequence, 153 residues long: MVILKGIPSVLTPELLYVLAQMGHGDELVLADANFPTSSVCKCGPVEIRADGVRIPELLKAILKLFPLDTYDESAAVMDLVPSDLLKGLKVPIWDQYSELLKQAGSDGNMKPVERFAFYERAKKAFAVVATGETALYGNLIIKKGVIPPEEQC.

His24 (proton donor) is an active-site residue. A substrate-binding site is contributed by Asp32. Residue Asp69 is part of the active site. 4 residues coordinate substrate: Met78, Tyr119, Tyr137, and Asn139. Residue Tyr119 is part of the active site.

The protein belongs to the RbsD / FucU family.

It carries out the reaction alpha-L-fucose = beta-L-fucose. Its function is as follows. Involved in the interconversion between alpha- and beta-L-fucoses. This Danio rerio (Zebrafish) protein is Fucose mutarotase (fuom).